Consider the following 361-residue polypeptide: DNA replication and repair protein RecF (361 aa).

Residue 30 to 37 (GDNAQGKT) participates in ATP binding.

It belongs to the RecF family.

Its subcellular location is the cytoplasm. In terms of biological role, the RecF protein is involved in DNA metabolism; it is required for DNA replication and normal SOS inducibility. RecF binds preferentially to single-stranded, linear DNA. It also seems to bind ATP. The protein is DNA replication and repair protein RecF of Clostridium botulinum (strain Alaska E43 / Type E3).